A 252-amino-acid chain; its full sequence is 1-(5-phosphoribosyl)-5-[(5-phosphoribosylamino)methylideneamino] imidazole-4-carboxamide isomerase (252 aa).

Asp-8 (proton acceptor) is an active-site residue. The active-site Proton donor is Asp-129.

This sequence belongs to the HisA/HisF family.

It is found in the cytoplasm. The catalysed reaction is 1-(5-phospho-beta-D-ribosyl)-5-[(5-phospho-beta-D-ribosylamino)methylideneamino]imidazole-4-carboxamide = 5-[(5-phospho-1-deoxy-D-ribulos-1-ylimino)methylamino]-1-(5-phospho-beta-D-ribosyl)imidazole-4-carboxamide. It functions in the pathway amino-acid biosynthesis; L-histidine biosynthesis; L-histidine from 5-phospho-alpha-D-ribose 1-diphosphate: step 4/9. The sequence is that of 1-(5-phosphoribosyl)-5-[(5-phosphoribosylamino)methylideneamino] imidazole-4-carboxamide isomerase from Synechococcus sp. (strain RCC307).